The sequence spans 349 residues: S-adenosylmethionine:tRNA ribosyltransferase-isomerase (349 aa).

The protein belongs to the QueA family. In terms of assembly, monomer.

It is found in the cytoplasm. It catalyses the reaction 7-aminomethyl-7-carbaguanosine(34) in tRNA + S-adenosyl-L-methionine = epoxyqueuosine(34) in tRNA + adenine + L-methionine + 2 H(+). It participates in tRNA modification; tRNA-queuosine biosynthesis. Its function is as follows. Transfers and isomerizes the ribose moiety from AdoMet to the 7-aminomethyl group of 7-deazaguanine (preQ1-tRNA) to give epoxyqueuosine (oQ-tRNA). The sequence is that of S-adenosylmethionine:tRNA ribosyltransferase-isomerase from Cupriavidus pinatubonensis (strain JMP 134 / LMG 1197) (Cupriavidus necator (strain JMP 134)).